We begin with the raw amino-acid sequence, 199 residues long: HTH-type transcriptional regulator BetI (199 aa).

In terms of domain architecture, HTH tetR-type spans 8–68; sequence EIRKPQLVKA…ETMREILRQL (61 aa). The H-T-H motif DNA-binding region spans 31–50; it reads SISLISKEAGVSTGIINHYF.

It participates in amine and polyamine biosynthesis; betaine biosynthesis via choline pathway [regulation]. Its function is as follows. Repressor involved in the biosynthesis of the osmoprotectant glycine betaine. It represses transcription of the choline transporter BetT and the genes of BetAB involved in the synthesis of glycine betaine. This chain is HTH-type transcriptional regulator BetI, found in Vibrio campbellii (strain ATCC BAA-1116).